The following is a 256-amino-acid chain: Type III pantothenate kinase (256 aa).

6-13 (DVGNTNTV) is an ATP binding site. Substrate-binding positions include Y100 and 107-110 (GADR). The Proton acceptor role is filled by D109. A K(+)-binding site is contributed by D129. Position 132 (T132) interacts with ATP. Substrate is bound at residue T184.

The protein belongs to the type III pantothenate kinase family. As to quaternary structure, homodimer. NH4(+) is required as a cofactor. It depends on K(+) as a cofactor.

Its subcellular location is the cytoplasm. The catalysed reaction is (R)-pantothenate + ATP = (R)-4'-phosphopantothenate + ADP + H(+). Its pathway is cofactor biosynthesis; coenzyme A biosynthesis; CoA from (R)-pantothenate: step 1/5. Its function is as follows. Catalyzes the phosphorylation of pantothenate (Pan), the first step in CoA biosynthesis. The chain is Type III pantothenate kinase from Myxococcus xanthus (strain DK1622).